We begin with the raw amino-acid sequence, 518 residues long: Retinal dehydrogenase 2 (518 aa).

Phosphotyrosine is present on Tyr168. NAD(+) contacts are provided by residues 184-186 (IPW), 210-213 (KPAE), and 264-266 (STE). Glu286 acts as the Proton acceptor in catalysis. The active-site Nucleophile is the Cys320. A Phosphoserine modification is found at Ser351. Residues 366-370 (KQYNK) and Glu417 contribute to the NAD(+) site.

This sequence belongs to the aldehyde dehydrogenase family. In terms of assembly, homotetramer. As to expression, found in testis and less abundantly in lung, brain, heart, liver and kidney.

It is found in the cytoplasm. The enzyme catalyses retinal + NAD(+) + H2O = retinoate + NADH + 2 H(+). It catalyses the reaction all-trans-retinal + NAD(+) + H2O = all-trans-retinoate + NADH + 2 H(+). It carries out the reaction all-trans-13,14-dihydroretinal + NAD(+) + H2O = all-trans-13,14-dihydroretinoate + NADH + 2 H(+). Its pathway is cofactor metabolism; retinol metabolism. Catalyzes the NAD-dependent oxidation of aldehyde substrates, such as all-trans-retinal and all-trans-13,14-dihydroretinal, to their corresponding carboxylic acids, all-trans-retinoate and all-trans-13,14-dihydroretinoate, respectively. Retinoate signaling is critical for the transcriptional control of many genes, for instance it is crucial for initiation of meiosis in both male and female. Recognizes retinal as substrate, both in its free form and when bound to cellular retinol-binding protein. Lacks activity with benzaldehyde, acetaldehyde and octanal. Displays complete lack of activity with citral. This chain is Retinal dehydrogenase 2 (Aldh1a2), found in Rattus norvegicus (Rat).